The primary structure comprises 211 residues: Arginine exporter protein ArgO (211 aa).

Helical transmembrane passes span 1 to 21 (MLSYYFQGLVLGAAMILPLGP), 37 to 57 (LMIAMLCAVSDLLLICAGIFG), 68 to 88 (LLALVTWGGVAFLLWYGFGAL), 111 to 131 (IIATMLAVTWLNPHVYLDTFV), 147 to 167 (WFALGTVSASFLWFFGLALLA), and 186 to 206 (LVGLVMWFIAFQLAKEGIHHI).

It belongs to the LysE/ArgO transporter (TC 2.A.75) family.

It is found in the cell inner membrane. The catalysed reaction is L-arginine(in) = L-arginine(out). Its function is as follows. Involved in the export of arginine. Important to control the intracellular level of arginine and the correct balance between arginine and lysine. In Enterobacter sp. (strain 638), this protein is Arginine exporter protein ArgO.